A 206-amino-acid chain; its full sequence is MPRSSRWVNQRATSKIKKFILFLGVAFVFYLYRYPSSPSTVEQSSTSIYNISVKDIEGKDVSLSKFTGKVLLIVNVASKCGLTHGNYKEMNILYAKYKTQGFEILAFPCNQFGSQEPGSNMEIKETVCNIFKAEFPIFDKIEVNGKNTCPLYNFLKEQKGGLFGDAIKWNFAKFLVDRQGNVVDRYAPTTSPLEIEKDIVKLLASA.

A mitochondrion-targeting transit peptide spans 1–12 (MPRSSRWVNQRA). The active site involves Cys80.

This sequence belongs to the glutathione peroxidase family. Interacts with ABI1 and ABI2. In terms of tissue distribution, ubiquitous.

The protein resides in the mitochondrion. The enzyme catalyses 2 glutathione + H2O2 = glutathione disulfide + 2 H2O. Its activity is regulated as follows. The redox states are modulated by H(2)O(2). Functionally, may constitute a glutathione peroxidase-like protective system against oxidative stresses. Involved positively in abscisic acid (ABA) signaling pathway that regulates numerous ABA responses, such as stomatal closure, seed germination and inhibition of vegetative growth. Oxidizes and represses target proteins (e.g. the phosphatase activity of ABI1 and ABI2) when oxidized by H(2)O(2), probably after ABA signaling. Modulates the calcium channel activity in guard cells in response to ABA or H(2)O(2). Confers tolerance to drought stress, by enhancing the ABA-dependent stomatal closure. In Arabidopsis thaliana (Mouse-ear cress), this protein is Probable glutathione peroxidase 3, mitochondrial (GPX3).